The sequence spans 432 residues: Glutamyl-tRNA reductase (432 aa).

Substrate contacts are provided by residues 55 to 58 (TCNR), serine 114, 119 to 121 (ETQ), and glutamine 125. The active-site Nucleophile is the cysteine 56. An NADP(+)-binding site is contributed by 194–199 (GAGEMI).

This sequence belongs to the glutamyl-tRNA reductase family. Homodimer.

The enzyme catalyses (S)-4-amino-5-oxopentanoate + tRNA(Glu) + NADP(+) = L-glutamyl-tRNA(Glu) + NADPH + H(+). It participates in porphyrin-containing compound metabolism; protoporphyrin-IX biosynthesis; 5-aminolevulinate from L-glutamyl-tRNA(Glu): step 1/2. Functionally, catalyzes the NADPH-dependent reduction of glutamyl-tRNA(Glu) to glutamate 1-semialdehyde (GSA). The polypeptide is Glutamyl-tRNA reductase (Burkholderia cenocepacia (strain ATCC BAA-245 / DSM 16553 / LMG 16656 / NCTC 13227 / J2315 / CF5610) (Burkholderia cepacia (strain J2315))).